The chain runs to 255 residues: Lactose phosphotransferase system repressor (255 aa).

The HTH deoR-type domain occupies 3–58; the sequence is KKRRLEKILDMLKIDGTITIKEIIDELDISDMTARRDLDALEADGLLTRTHGGAQL. The H-T-H motif DNA-binding region spans 20–39; that stretch reads ITIKEIIDELDISDMTARRD.

In terms of biological role, repressor of the lactose catabolism operon. Galactose-6-phosphate is the inducer. The polypeptide is Lactose phosphotransferase system repressor (lacR) (Lactococcus lactis subsp. lactis (Streptococcus lactis)).